The chain runs to 376 residues: MESYDIIANQPVVIDNGSGVIKAGFAGDQIPKYCFPNYVGRPKHMRVMAGALEGDLFIGPKAEEHRGLLTIRYPMEHGVVRDWNDMERIWQYVYSKDQLQTFSEEHPVLLTEAPLNPSKNREKAAEVFFETFNVPALFISMQAVLSLYATGRTTGVVLDSGDGVTHAVPIYEGFAMPHSIMRVDIAGRDVSRYLRLLLRKEGVDFHTSAEFEVVRTIKERACYLSINPQKDEALETEKVQYTLPDGSTLDVGPARFRAPELLFQPDLVGDESEGLHEVVAFAIHKSDMDLRRTLFANIVLSGGSTLFKGFGDRLLSEVKKLAPKDIKIKISAPQERLYSTWIGGSILASLDTFKKMWVSKKEYEEDGSRAIHRKTF.

Methionine 1 is modified (N-acetylmethionine). The residue at position 4 (tyrosine 4) is a 3'-nitrotyrosine.

This sequence belongs to the actin family. ARP1 subfamily.

Its subcellular location is the cytoplasm. The protein localises to the cytoskeleton. The protein resides in the microtubule organizing center. It localises to the centrosome. Component of a multi-subunit complex involved in microtubule based vesicle motility. It is associated with the centrosome. The polypeptide is Beta-centractin (ACTR1B) (Homo sapiens (Human)).